A 185-amino-acid polypeptide reads, in one-letter code: Adenine phosphoribosyltransferase (185 aa).

Belongs to the purine/pyrimidine phosphoribosyltransferase family. As to quaternary structure, homodimer.

The protein localises to the cytoplasm. It carries out the reaction AMP + diphosphate = 5-phospho-alpha-D-ribose 1-diphosphate + adenine. It participates in purine metabolism; AMP biosynthesis via salvage pathway; AMP from adenine: step 1/1. Catalyzes a salvage reaction resulting in the formation of AMP, that is energically less costly than de novo synthesis. This is Adenine phosphoribosyltransferase from Arthrobacter sp. (strain FB24).